Reading from the N-terminus, the 353-residue chain is Draxin-B (353 aa).

Positions 1-21 are cleaved as a signal peptide; sequence MASSWCLPLALLVSNLAVSHS. Disordered regions lie at residues 23 to 183, 198 to 222, and 246 to 268; these read EPSS…KEGS, TVMSEHPPMLPPASTKPKKSGRGKV, and VDAWPSSRKKDKRRSKNLSSGNV. Residues 138 to 167 are compositionally biased toward basic residues; it reads GPHKGKAQGHGHHFDHRRHGGRRDKGRHTK. The span at 252–261 shows a compositional bias: basic residues; the sequence is SRKKDKRRSK. N-linked (GlcNAc...) asparagine glycosylation is found at Asn-262 and Asn-267.

It belongs to the draxin family.

Its subcellular location is the secreted. Functionally, chemorepulsive axon guidance protein required for the development of spinal cord and forebrain commissures. Acts as a chemorepulsive guidance protein for commissural axons during development. Able to inhibit or repel neurite outgrowth from dorsal spinal cord. The polypeptide is Draxin-B (draxin-B) (Salmo salar (Atlantic salmon)).